The following is a 215-amino-acid chain: Protein GET1 (215 aa).

The Lumenal segment spans residues 1–4; the sequence is MINL. A helical membrane pass occupies residues 5–24; the sequence is ALVIFLCTLLNQIVSWVGKS. Topologically, residues 25 to 108 are cytoplasmic; the sequence is VLQEIAFTAY…SFSKKFSTLL (84 aa). Residues 73–94 adopt a coiled-coil conformation; the sequence is AKLRRKLDKGLADLEKTNNTLS. A helical membrane pass occupies residues 109–129; it reads WLMTTGAQFLLSWWFRKQPIF. The Lumenal segment spans residues 130-153; the sequence is WLPEGWVPYPVAWLLSFPSAPIGS. A helical membrane pass occupies residues 154–170; sequence VSSGAWGAICRRVLSTL. Residues 171-215 are Cytoplasmic-facing; the sequence is QEIIQSVLAPSPAATGPVPTGPSSAKNDQPEAKIEALALEHEKLD. A disordered region spans residues 181-202; that stretch reads SPAATGPVPTGPSSAKNDQPEA.

Belongs to the WRB/GET1 family. Interacts with GET3.

The protein resides in the endoplasmic reticulum membrane. In terms of biological role, required for the post-translational delivery of tail-anchored (TA) proteins to the endoplasmic reticulum. Acts as a membrane receptor for soluble GET3, which recognizes and selectively binds the transmembrane domain of TA proteins in the cytosol. The chain is Protein GET1 from Cryptococcus neoformans var. neoformans serotype D (strain B-3501A) (Filobasidiella neoformans).